The primary structure comprises 309 residues: Aspartate carbamoyltransferase catalytic subunit (309 aa).

Positions 49 and 50 each coordinate carbamoyl phosphate. K77 contributes to the L-aspartate binding site. Carbamoyl phosphate contacts are provided by R99, H127, and Q130. 2 residues coordinate L-aspartate: R160 and R211. Positions 252 and 253 each coordinate carbamoyl phosphate.

Belongs to the aspartate/ornithine carbamoyltransferase superfamily. ATCase family. In terms of assembly, heterododecamer (2C3:3R2) of six catalytic PyrB chains organized as two trimers (C3), and six regulatory PyrI chains organized as three dimers (R2).

It carries out the reaction carbamoyl phosphate + L-aspartate = N-carbamoyl-L-aspartate + phosphate + H(+). It participates in pyrimidine metabolism; UMP biosynthesis via de novo pathway; (S)-dihydroorotate from bicarbonate: step 2/3. Its function is as follows. Catalyzes the condensation of carbamoyl phosphate and aspartate to form carbamoyl aspartate and inorganic phosphate, the committed step in the de novo pyrimidine nucleotide biosynthesis pathway. This chain is Aspartate carbamoyltransferase catalytic subunit, found in Geobacillus sp. (strain WCH70).